We begin with the raw amino-acid sequence, 1006 residues long: Probable beta-galactosidase A (1006 aa).

An N-terminal signal peptide occupies residues 1–18 (MKLLSVCAVALLAAQAAG). 4 residues coordinate substrate: Tyr-96, Asn-140, Ala-141, and Glu-142. N-linked (GlcNAc...) asparagine glycosylation is present at Asn-156. Asn-199 contacts substrate. Residue Glu-200 is the Proton donor of the active site. Cysteines 205 and 206 form a disulfide. Asn-207 carries N-linked (GlcNAc...) asparagine glycosylation. Tyr-260 is a substrate binding site. Cys-266 and Cys-315 form a disulfide bridge. Residue Glu-298 is the Nucleophile of the active site. Residue Tyr-364 coordinates substrate. Residues Asn-373, Asn-402, Asn-422, Asn-622, Asn-777, and Asn-914 are each glycosylated (N-linked (GlcNAc...) asparagine).

It belongs to the glycosyl hydrolase 35 family.

The protein localises to the secreted. The enzyme catalyses Hydrolysis of terminal non-reducing beta-D-galactose residues in beta-D-galactosides.. Functionally, cleaves beta-linked terminal galactosyl residues from gangliosides, glycoproteins, and glycosaminoglycans. In Neosartorya fischeri (strain ATCC 1020 / DSM 3700 / CBS 544.65 / FGSC A1164 / JCM 1740 / NRRL 181 / WB 181) (Aspergillus fischerianus), this protein is Probable beta-galactosidase A (lacA).